A 596-amino-acid chain; its full sequence is MLASAGLLQTSLIWVAYAVAVALVLLVAIITTFTWQSPHERSVTVSIVAIVSLTSLLATVFLLPVDIALVSSTASAHLGAKKDWATPERIDGILLTLKVVYYTLYSFDALLCLIVIPFAYFWYEEYDEVEEEEGTSGAGARFWKAAKYTLGFVFLVLILFLLGFFVPAAGSGNGKHLDLDYFKRLLAANKGEKALTFGVGLLITLGTFLYTLYTGAGLALLPVSLIKSAPSISAPQLSATIATDLEHNRELQRQIEMRNAGRPDGISQKDRRELDALLREERTLVRRERLAAETRGDGRSGVFRAWTKIQAVFRPLKLLGGILLLLLSILVWASMLITGIDKAANSICKEHCGYILGHINVFQPVNWIFVQSAKAFPVDYILMALLVLFFFGSSITGIATIGIRFLWVRVFQIKKGRTSPQALLIATVMLALIILAINYAIAMIVAPQYAIYGTQTFCVNAPRHPGEQPDCREHRDMVRPCSEVFSEPAAKDVCTPTVMSTFLNRVTINWPVFGAIDFWAQFAFLGVFMVVFVTSLFRTPRLNLSELDEEAEVDEEEGLLASTGRRFGATWGDITGRAKNRNGYGTGGGEGSNGRG.

Transmembrane regions (helical) follow at residues 13–33, 45–65, 99–119, 150–170, 201–221, 318–338, 353–373, 381–401, 425–445, and 512–532; these read IWVA…ITTF, VSIV…LLPV, VVYY…IPFA, LGFV…PAAG, LLIT…LALL, LLGG…MLIT, GYIL…VQSA, ILMA…IATI, IATV…AMIV, and VFGA…MVVF. Asn-543 is a glycosylation site (N-linked (GlcNAc...) asparagine). The disordered stretch occupies residues 576–596; that stretch reads GRAKNRNGYGTGGGEGSNGRG. Residues 584 to 596 are compositionally biased toward gly residues; sequence YGTGGGEGSNGRG.

It belongs to the LIMR family. LMBRD1 subfamily.

It is found in the lysosome membrane. Its function is as follows. Probable lysosomal cobalamin transporter. Required to export cobalamin from lysosomes allowing its conversion to cofactors. In Podospora anserina (strain S / ATCC MYA-4624 / DSM 980 / FGSC 10383) (Pleurage anserina), this protein is Probable lysosomal cobalamin transporter.